The following is a 97-amino-acid chain: Ferredoxin-thioredoxin reductase, variable chain (97 aa).

Belongs to the ferredoxin thioredoxin reductase alpha subunit family. Heterodimer of subunit A (variable subunit) and subunit B (catalytic subunit). Heterodimeric FTR forms a complex with ferredoxin and thioredoxin.

Its subcellular location is the plastid. It localises to the chloroplast. In terms of biological role, variable subunit of the ferredoxin-thioredoxin reductase (FTR), which catalyzes the two-electron reduction of thioredoxins by the electrons provided by reduced ferredoxin. This is Ferredoxin-thioredoxin reductase, variable chain from Zea mays (Maize).